Reading from the N-terminus, the 338-residue chain is Ketol-acid reductoisomerase (NADP(+)) (338 aa).

In terms of domain architecture, KARI N-terminal Rossmann spans 1–181 (MNVFYDKDAD…GGGRAGIIET (181 aa)). Residues 24 to 27 (YGSQ), arginine 47, and serine 52 each bind NADP(+). Residue histidine 107 is part of the active site. Glycine 133 serves as a coordination point for NADP(+). The region spanning 182 to 327 (NFREETETDL…AKLRAMMPWI (146 aa)) is the KARI C-terminal knotted domain. Mg(2+) is bound by residues aspartate 190, glutamate 194, glutamate 226, and glutamate 230. Serine 251 is a substrate binding site.

Belongs to the ketol-acid reductoisomerase family. Mg(2+) serves as cofactor.

The enzyme catalyses (2R)-2,3-dihydroxy-3-methylbutanoate + NADP(+) = (2S)-2-acetolactate + NADPH + H(+). It carries out the reaction (2R,3R)-2,3-dihydroxy-3-methylpentanoate + NADP(+) = (S)-2-ethyl-2-hydroxy-3-oxobutanoate + NADPH + H(+). Its pathway is amino-acid biosynthesis; L-isoleucine biosynthesis; L-isoleucine from 2-oxobutanoate: step 2/4. It participates in amino-acid biosynthesis; L-valine biosynthesis; L-valine from pyruvate: step 2/4. Its function is as follows. Involved in the biosynthesis of branched-chain amino acids (BCAA). Catalyzes an alkyl-migration followed by a ketol-acid reduction of (S)-2-acetolactate (S2AL) to yield (R)-2,3-dihydroxy-isovalerate. In the isomerase reaction, S2AL is rearranged via a Mg-dependent methyl migration to produce 3-hydroxy-3-methyl-2-ketobutyrate (HMKB). In the reductase reaction, this 2-ketoacid undergoes a metal-dependent reduction by NADPH to yield (R)-2,3-dihydroxy-isovalerate. The chain is Ketol-acid reductoisomerase (NADP(+)) from Burkholderia multivorans (strain ATCC 17616 / 249).